A 75-amino-acid chain; its full sequence is UPF0352 protein KPN78578_25810 (75 aa).

It belongs to the UPF0352 family.

The chain is UPF0352 protein KPN78578_25810 from Klebsiella pneumoniae subsp. pneumoniae (strain ATCC 700721 / MGH 78578).